Here is a 163-residue protein sequence, read N- to C-terminus: Nucleotide-binding protein MAP_4063c (163 aa).

It belongs to the YajQ family.

In terms of biological role, nucleotide-binding protein. This is Nucleotide-binding protein MAP_4063c from Mycolicibacterium paratuberculosis (strain ATCC BAA-968 / K-10) (Mycobacterium paratuberculosis).